Reading from the N-terminus, the 203-residue chain is uncharacterized protein (203 aa).

This is an uncharacterized protein from Pasteurella multocida (strain Pm70).